Consider the following 362-residue polypeptide: MAFQFNFSIEEDLENKLTSLDDGTCVLESQKGKQDKRQSTERPGLPRDHSWKCSSLGNAASSEDTGSPPPIADRSDDPEACKHQPSWKPAKEHVMPKDVNHVLENTVLEMLPGPQHANTAVVKTVSLKEKFPGENIVSKSFSSHSDLIPGVYEGGLKIWECTFDLLTYFTKAKVKFAGQKVLDLGCGSGLLGITASKGGAREVHFQDYNGLVIDEVTLPNVVANVPLQDDSNGKNEPDGKRQRKSEVGREICKCRLFSGEWAEFCKLVLREKLFVKYDLILTSETIYNPDYYSTLHETFLRLLSRSGRVLLASKAHYFGVGGGVHLFQKFVEEKGVFETRTLEVIDEGLKRFLMEMTFKHPS.

The interval 18 to 88 (TSLDDGTCVL…EACKHQPSWK (71 aa)) is disordered. Positions 30 to 51 (QKGKQDKRQSTERPGLPRDHSW) are enriched in basic and acidic residues. Polar residues predominate over residues 52–65 (KCSSLGNAASSEDT). A phosphoserine mark is found at Ser62 and Ser67. A compositionally biased stretch (basic and acidic residues) spans 73–82 (DRSDDPEACK). His144 carries the tele-methylhistidine modification. Residues 158 to 162 (IWECT), Gly185, and 206 to 208 (QDY) each bind S-adenosyl-L-methionine. The Nuclear localization signal signature appears at 237 to 243 (PDGKRQR). S-adenosyl-L-methionine is bound by residues 259 to 261 (GEW) and Ser283.

This sequence belongs to the methyltransferase superfamily. METTL18 family. Interacts with GRWD1 and members of the heat shock protein 90 and 70 families; these proteins may possibly be methylation substrates for the enzyme. Post-translationally, monomethylated at His-144 through automethylation. Automethylation at His-144 positively regulates the methyltransferase activity toward RPL3. Probably methylated on other residues.

Its subcellular location is the cytoplasm. The protein resides in the cytosol. It is found in the nucleus. The protein localises to the nucleolus. It catalyses the reaction L-histidyl-[protein] + S-adenosyl-L-methionine = N(tele)-methyl-L-histidyl-[protein] + S-adenosyl-L-homocysteine + H(+). In terms of biological role, protein-L-histidine N-tele-methyltransferase that specifically monomethylates RPL3, thereby regulating translation elongation. Histidine methylation of RPL3 regulates translation elongation by slowing ribosome traversal on tyrosine codons: slower elongation provides enough time for proper folding of synthesized proteins and prevents cellular aggregation of tyrosine-rich proteins. The chain is Histidine protein methyltransferase 1 homolog from Mus musculus (Mouse).